Here is a 119-residue protein sequence, read N- to C-terminus: DNA-binding protein MMP0157 (119 aa).

The span at 1 to 12 shows a compositional bias: basic and acidic residues; sequence MNPEEIRQRRLQ. The interval 1–35 is disordered; it reads MNPEEIRQRRLQEMQAKAQAQGAANDPEAQRQMQE.

This sequence belongs to the PDCD5 family.

The polypeptide is DNA-binding protein MMP0157 (Methanococcus maripaludis (strain DSM 14266 / JCM 13030 / NBRC 101832 / S2 / LL)).